The primary structure comprises 276 residues: Stathmin domain-containing protein 1 (276 aa).

Disordered stretches follow at residues 1–40 (MGCGPSQPAEDRRRVRAPKKGWKEEFKADVSVPHTGENCS), 61–106 (VQMG…RERQ), and 226–250 (GFEPSDLQGGKPLKRKKSKCDATLI). Gly2 carries N-myristoyl glycine lipidation. Composition is skewed to polar residues over residues 68–78 (GTISENSPSPS) and 87–100 (DLVTNGLINKPQSL). The 127-residue stretch at 118 to 244 (QGIIQSHSKV…GKPLKRKKSK (127 aa)) folds into the SLD domain.

The sequence is that of Stathmin domain-containing protein 1 (STMND1) from Homo sapiens (Human).